Here is a 681-residue protein sequence, read N- to C-terminus: PTS system glucose-specific EIICBA component (681 aa).

The PTS EIIC type-1 domain maps to 3–414 (KKLFGQLQRI…LKYKTPGRED (412 aa)). Transmembrane regions (helical) follow at residues 16-36 (LMLP…GTAM), 73-93 (MIFA…AAIA), 126-146 (ILGI…GALA), 170-190 (FVPI…ALIW), 199-219 (AFST…FGFI), 273-293 (FMQG…LAIY), 303-323 (VVAG…ITEP), 328-348 (FLFV…LSFL), 355-375 (LHLG…GILP), and 383-403 (VIPV…FLIV). The region spanning 425 to 506 (TELPYAVLEA…QQIMNGQVVE (82 aa)) is the PTS EIIB type-1 domain. The active-site Phosphocysteine intermediate; for EIIB activity is the Cys-447. A PTS EIIA type-1 domain is found at 551-655 (DQVFSEKMMG…SDITPIIVTQ (105 aa)). Residue His-603 is the Tele-phosphohistidine intermediate; for EIIA activity of the active site.

It is found in the cell membrane. The enzyme catalyses N(pros)-phospho-L-histidyl-[protein] + D-glucose(out) = D-glucose 6-phosphate(in) + L-histidyl-[protein]. In terms of biological role, the phosphoenolpyruvate-dependent sugar phosphotransferase system (sugar PTS), a major carbohydrate active transport system, catalyzes the phosphorylation of incoming sugar substrates concomitantly with their translocation across the cell membrane. This system is involved in glucose transport. This chain is PTS system glucose-specific EIICBA component (ptsG), found in Staphylococcus aureus (strain NCTC 8325 / PS 47).